A 422-amino-acid chain; its full sequence is Probable protease eep (422 aa).

His-18 contributes to the Zn(2+) binding site. Glu-19 is an active-site residue. His-22 contributes to the Zn(2+) binding site. 3 consecutive transmembrane segments (helical) span residues 176–196 (FAGPMNNFILGFILFTLAVFL), 349–369 (VVFLMAMLSMNLGIINLLPIP), and 394–414 (EGIITLIGFGFVMVLMVLVTW). In terms of domain architecture, PDZ spans 179 to 273 (PMNNFILGFI…EEQLTVTPEK (95 aa)).

The protein belongs to the peptidase M50B family. It depends on Zn(2+) as a cofactor.

The protein resides in the cell membrane. Functionally, involved in production of the peptide pheromone cAD1. In Enterococcus faecalis (strain ATCC 700802 / V583), this protein is Probable protease eep (eep).